Reading from the N-terminus, the 192-residue chain is Fe/S biogenesis protein NfuA (192 aa).

Residues Cys149 and Cys152 each coordinate [4Fe-4S] cluster.

This sequence belongs to the NfuA family. In terms of assembly, homodimer. [4Fe-4S] cluster is required as a cofactor.

Functionally, involved in iron-sulfur cluster biogenesis. Binds a 4Fe-4S cluster, can transfer this cluster to apoproteins, and thereby intervenes in the maturation of Fe/S proteins. Could also act as a scaffold/chaperone for damaged Fe/S proteins. This chain is Fe/S biogenesis protein NfuA, found in Shewanella baltica (strain OS223).